Consider the following 276-residue polypeptide: Small ribosomal subunit protein uS3 (276 aa).

Positions isoleucine 38–lysine 106 constitute a KH type-2 domain. Residues asparagine 216–glycine 228 are compositionally biased toward low complexity. The disordered stretch occupies residues asparagine 216–alanine 276. The span at glycine 229–glycine 245 shows a compositional bias: basic and acidic residues. The span at proline 254 to alanine 269 shows a compositional bias: low complexity.

Belongs to the universal ribosomal protein uS3 family. As to quaternary structure, part of the 30S ribosomal subunit. Forms a tight complex with proteins S10 and S14.

Functionally, binds the lower part of the 30S subunit head. Binds mRNA in the 70S ribosome, positioning it for translation. The protein is Small ribosomal subunit protein uS3 of Streptomyces griseus subsp. griseus (strain JCM 4626 / CBS 651.72 / NBRC 13350 / KCC S-0626 / ISP 5235).